The primary structure comprises 445 residues: Methylenetetrahydrofolate--tRNA-(uracil-5-)-methyltransferase TrmFO (445 aa).

9–14 contacts FAD; it reads GGGLAG.

This sequence belongs to the MnmG family. TrmFO subfamily. It depends on FAD as a cofactor.

The protein localises to the cytoplasm. The enzyme catalyses uridine(54) in tRNA + (6R)-5,10-methylene-5,6,7,8-tetrahydrofolate + NADH + H(+) = 5-methyluridine(54) in tRNA + (6S)-5,6,7,8-tetrahydrofolate + NAD(+). It catalyses the reaction uridine(54) in tRNA + (6R)-5,10-methylene-5,6,7,8-tetrahydrofolate + NADPH + H(+) = 5-methyluridine(54) in tRNA + (6S)-5,6,7,8-tetrahydrofolate + NADP(+). In terms of biological role, catalyzes the folate-dependent formation of 5-methyl-uridine at position 54 (M-5-U54) in all tRNAs. The chain is Methylenetetrahydrofolate--tRNA-(uracil-5-)-methyltransferase TrmFO from Aquifex aeolicus (strain VF5).